Reading from the N-terminus, the 2072-residue chain is Protein still life, isoform SIF type 1 (2072 aa).

A lipid anchor (N-myristoyl glycine) is attached at Gly-2. Residues 29–147 form the WH1 domain; that stretch reads RRDGHLLSSF…ECCSPSFKFS (119 aa). Disordered regions lie at residues 153–188, 245–284, 327–355, 459–486, 502–576, 618–655, and 699–747; these read SYSL…EPQC, DNVA…NTNT, EGTQ…RNKD, NNTM…RGYP, EGSP…SPTS, AKSS…ELIR, and SGSS…YKSA. The segment covering 275-284 has biased composition (polar residues); it reads VANSGVNTNT. Low complexity-rich tracts occupy residues 338–351, 459–476, and 522–553; these read SVGT…GTGT, NNTM…SGSR, and SSSN…PPQR. Positions 564 to 576 are enriched in polar residues; sequence APNVTPTPGSPTS. Residues 634-655 are compositionally biased toward basic and acidic residues; that stretch reads IRDKERDRDRDGYYSDRNELIR. The span at 732 to 743 shows a compositional bias: polar residues; that stretch reads SLRQDSSLNDSG. Residues 840–958 form the PH domain; the sequence is TGAVRKAGFL…SIHSACAAAF (119 aa). The segment at 1088–1119 is disordered; it reads GRGATKRRPPMLSRSNSGSSRRSMQMNSRDEP. Over residues 1100–1114 the composition is skewed to low complexity; sequence SRSNSGSSRRSMQMN. The 68-residue stretch at 1121–1188 folds into the RBD domain; sequence KTFKVAMPDN…PHRNDLIENY (68 aa). One can recognise a PDZ domain in the interval 1204 to 1293; that stretch reads QVELQRTTLE…LSMMMRSSRT (90 aa). Residues 1403–1424 are disordered; the sequence is AEQETRKSSPTGSVTSSVSTTA. Positions 1410 to 1424 are enriched in low complexity; it reads SSPTGSVTSSVSTTA. One can recognise a DH domain in the interval 1436–1630; sequence KLRKVVMELV…EKVAEHINEM (195 aa). 3 disordered regions span residues 1803–1832, 1844–2039, and 2051–2072; these read MKNF…NSQT, HGSH…YQPV, and PRDM…DVKN. 2 stretches are compositionally biased toward low complexity: residues 1811–1821 and 1926–1943; these read GSVSGHSSQGM and QQQQ…QQGH. A compositionally biased stretch (basic and acidic residues) spans 1970-1984; the sequence is HSSDIERIDPGTKSE. Residues 2007 to 2022 are compositionally biased toward low complexity; it reads LTLSTTSTLSVGSTGS. A compositionally biased stretch (polar residues) spans 2023–2032; sequence QARLIQSSHP.

Expressed in both larval and adult brains, mainly in a subset of neurons but not in glia. In the adult eye is expressed in the two primary pigment cells in the subapical region of the eye. Also present in photoreceptors.

The protein resides in the synapse. In terms of biological role, regulates synaptic differentiation through the organization of actin cytoskeleton possibly by activating Rho-like GTPases. Is likely a factor in the cascade of Rac1 or Cdc42 in the neurons. May play a role in maintaining proper septate junction functions. Required for eye development and most likely affects corneal lens-formation. This is Protein still life, isoform SIF type 1 (sif) from Drosophila melanogaster (Fruit fly).